Here is a 343-residue protein sequence, read N- to C-terminus: Probable siderophore transport system permease protein YfhA (343 aa).

9 helical membrane-spanning segments follow: residues 15–35 (WIVF…SAGL), 69–89 (ILTA…LQGL), 97–117 (PDII…MMFF), 130–150 (WLPA…YLLA), 160–180 (LVLI…LLMI), 204–224 (QHVK…FVAL), 249–269 (FFLL…AGTI), 289–309 (GALL…ADIV), and 317–337 (VEVP…IYLL).

Belongs to the binding-protein-dependent transport system permease family. FecCD subfamily. As to quaternary structure, the complex is composed of one ATP-binding protein (YusV), two transmembrane proteins (YfiZ and YfhA) and a solute-binding protein (YfiY).

The protein localises to the cell membrane. Part of the ABC transporter complex YfiYZ/YfhA/YusV involved in import of the iron-hydroxamate siderophores schizokinen, arthrobactin and corprogen. The sequence is that of Probable siderophore transport system permease protein YfhA (yfhA) from Bacillus subtilis (strain 168).